The sequence spans 400 residues: Envelope glycoprotein M (400 aa).

Residues 1–16 lie on the Intravirion side of the membrane; it reads MRASKSDRFLMSSWVK. A helical transmembrane segment spans residues 17-37; that stretch reads LLFVAVIMYICSAVVPMAATY. Residues 38–76 are Virion surface-facing; the sequence is EGLGFPCYFNNLVNYSALNLTVRNSAKHLTPTLFLEKPE. Residues 77-97 form a helical membrane-spanning segment; sequence MLVYIFWTFIVDGIAIVYYCL. The Intravirion segment spans residues 98–113; that stretch reads AAVAVYRAKHVHATTM. The chain crosses the membrane as a helical span at residues 114-134; the sequence is MSMQSWIALLGSHSVLYVAIL. Residues 135–152 lie on the Virion surface side of the membrane; that stretch reads RMWSMQLFIHVLSYKHVL. Residues 153–173 traverse the membrane as a helical segment; that stretch reads MAAFVYCIHFCISFAHIQSLI. The Intravirion portion of the chain corresponds to 174 to 208; that stretch reads TCNSAQWEIPLLEQHVPDNTMMESLLTRWKPVCVN. The helical transmembrane segment at 209–229 threads the bilayer; it reads LYLSTTALEMLLFSLSTMMAV. Over 230-234 the chain is Virion surface; that stretch reads GNSFY. A helical transmembrane segment spans residues 235–255; sequence VLVSDAIFGAVNMFLALTVVW. At 256 to 270 the chain is on the intravirion side; it reads YINTEFFLVKFMRRQ. A helical membrane pass occupies residues 271–291; the sequence is VGFYVGVFVGYLILLLPVIRY. Over 292-300 the chain is Virion surface; that stretch reads ENAFVQANL. The helical transmembrane segment at 301–321 threads the bilayer; that stretch reads HYIVAINISCIPILCILAIVI. Residues 322-400 are Intravirion-facing; that stretch reads RVIRSDWGLC…EIDETQMIFI (79 aa). Residues 348–394 form a disordered region; that stretch reads DRTPTVHQKPPPLPAKTRARAKVKDISTPAPRTQYQSDHESDSEIDE.

The protein belongs to the herpesviridae glycoprotein M family. Interacts (via N-terminus) with gN (via N-terminus). The gM-gN heterodimer forms the gCII complex. Post-translationally, N-glycosylated.

Its subcellular location is the virion membrane. The protein localises to the host Golgi apparatus. It is found in the host trans-Golgi network. It localises to the host endosome membrane. The protein resides in the host nucleus inner membrane. Its function is as follows. Envelope glycoprotein important for virion assembly and egress. Plays a role in the correct incorporation of gH-gL into virion membrane. Directs the glycoprotein N (gN) to the host trans-Golgi network. This Homo sapiens (Human) protein is Envelope glycoprotein M.